A 92-amino-acid polypeptide reads, in one-letter code: Small ribosomal subunit protein uS19 (92 aa).

It belongs to the universal ribosomal protein uS19 family.

Protein S19 forms a complex with S13 that binds strongly to the 16S ribosomal RNA. In Shewanella amazonensis (strain ATCC BAA-1098 / SB2B), this protein is Small ribosomal subunit protein uS19.